Consider the following 188-residue polypeptide: Protein SSX3 (188 aa).

Residues 20–83 enclose the KRAB-related domain; sequence KIQKAFDDIA…KRVTDFQGND (64 aa). The tract at residues 113-162 is disordered; the sequence is PKKPAEEGNVSKEVPEASGPQNDGKQLCPPGKPTTSEKINMISGPKRGEH. A compositionally biased stretch (basic and acidic residues) spans 115 to 127; that stretch reads KPAEEGNVSKEVP. Serine 123 is subject to Phosphoserine.

This sequence belongs to the SSX family. Interacts with SSX2IP.

Could act as a modulator of transcription. This chain is Protein SSX3 (SSX3), found in Homo sapiens (Human).